A 282-amino-acid polypeptide reads, in one-letter code: Undecaprenyl-diphosphatase (282 aa).

The next 8 helical transmembrane spans lie at 1–21 (MNLFQAIILGIIQGLTEFLPI), 40–60 (GAAFTAIIQIGTLAAVLIYFA), 89–109 (WMIAVGTIPIVVFGLTFKHEI), 112–132 (VLRSLYIVSASMIGLALVLVV), 153–173 (LSWTDAIIIGLAQAMALIPGS), 196–216 (FSFLLSLPSVFAAGMLELYQT), 228–248 (LNLAVATIAAFIFGYLSIAFL), and 258–278 (GIFIAYRLILGIGLIVMIGTG).

The protein belongs to the UppP family.

The protein resides in the cell inner membrane. The catalysed reaction is di-trans,octa-cis-undecaprenyl diphosphate + H2O = di-trans,octa-cis-undecaprenyl phosphate + phosphate + H(+). Catalyzes the dephosphorylation of undecaprenyl diphosphate (UPP). Confers resistance to bacitracin. The protein is Undecaprenyl-diphosphatase of Chlorobaculum tepidum (strain ATCC 49652 / DSM 12025 / NBRC 103806 / TLS) (Chlorobium tepidum).